The sequence spans 415 residues: Multidrug resistance protein MdtA (415 aa).

An N-terminal signal peptide occupies residues methionine 1–alanine 21. Disordered regions lie at residues serine 32–alanine 60 and glutamate 392–serine 415. Residues proline 399–serine 415 are compositionally biased toward basic and acidic residues.

This sequence belongs to the membrane fusion protein (MFP) (TC 8.A.1) family. As to quaternary structure, part of a tripartite efflux system composed of MdtA, MdtB and MdtC.

Its subcellular location is the cell inner membrane. Functionally, the MdtABC tripartite complex confers resistance against novobiocin and deoxycholate. In Escherichia coli (strain 55989 / EAEC), this protein is Multidrug resistance protein MdtA.